Consider the following 185-residue polypeptide: Ribosome-recycling factor (185 aa).

It belongs to the RRF family.

It localises to the cytoplasm. Its function is as follows. Responsible for the release of ribosomes from messenger RNA at the termination of protein biosynthesis. May increase the efficiency of translation by recycling ribosomes from one round of translation to another. This is Ribosome-recycling factor from Aromatoleum aromaticum (strain DSM 19018 / LMG 30748 / EbN1) (Azoarcus sp. (strain EbN1)).